A 97-amino-acid chain; its full sequence is uncharacterized protein (97 aa).

The segment covering 1–24 has biased composition (basic and acidic residues); the sequence is MTQKNGADRPDDYKRFSSLDKEYD. Positions 1–97 are disordered; that stretch reads MTQKNGADRP…FEGTIDQNLD (97 aa). Residues 31–43 show a composition bias toward low complexity; sequence SNTETESVNTETQ. Residues 44–53 show a composition bias toward basic and acidic residues; it reads THNKENKNDT.

This is an uncharacterized protein from Bacillus subtilis (strain 168).